Consider the following 1217-residue polypeptide: Disease resistance protein RPS4 (1217 aa).

Residues Pro-14–Leu-175 form the TIR domain. Glu-88 is an active-site residue. The NB-ARC domain occupies Glu-211–Glu-472. LRR repeat units follow at residues His-260–Glu-285, Pro-436–Asp-459, Leu-614–Pro-636, Ile-637–Thr-659, Ala-682–Met-706, Met-708–Leu-728, Ile-729–Ser-749, Asp-750–Arg-774, Leu-796–Ile-818, Ser-819–Tyr-842, and Leu-861–Cys-887. The tract at residues Thr-1162 to Thr-1195 is disordered. A Nuclear localization signal motif is present at residues Lys-1170–Met-1177.

In terms of assembly, interacts with EDS1.

The protein localises to the nucleus. It carries out the reaction NAD(+) + H2O = ADP-D-ribose + nicotinamide + H(+). Its function is as follows. Disease resistance (R) protein that specifically recognizes the AvrRps4 type III effector avirulence protein from Pseudomonas syringae. Resistance proteins guard the plant against pathogens that contain an appropriate avirulence protein via an indirect interaction with this avirulence protein. That triggers a defense system including the hypersensitive response, which restricts the pathogen growth. The combined presence of both regular and alternative RPS4 transcripts with truncated open reading frames (ORFs) is necessary for function. RPS4 function is regulated at multiple levels, including gene expression, alternative splicing, and protein stability. Acts as a disease resistance protein involved in resistance to fungal and bacterial pathogens, including R.solanacearum, P.syringae pv. tomato and C.higginsianum. In presence of RRS1, elicites an EDS1-dependent hypersensitive response. The polypeptide is Disease resistance protein RPS4 (Arabidopsis thaliana (Mouse-ear cress)).